Here is a 256-residue protein sequence, read N- to C-terminus: 5'-nucleotidase SurE (256 aa).

A divalent metal cation contacts are provided by aspartate 8, aspartate 9, serine 40, and asparagine 94.

It belongs to the SurE nucleotidase family. The cofactor is a divalent metal cation.

The protein resides in the cytoplasm. It carries out the reaction a ribonucleoside 5'-phosphate + H2O = a ribonucleoside + phosphate. In terms of biological role, nucleotidase that shows phosphatase activity on nucleoside 5'-monophosphates. The sequence is that of 5'-nucleotidase SurE from Wolbachia pipientis subsp. Culex pipiens (strain wPip).